The sequence spans 218 residues: uncharacterized protein (218 aa).

Helical transmembrane passes span 10 to 30 (IPPL…SLGI), 55 to 75 (IGVG…GYSI), 147 to 167 (VTGG…AGMA), and 175 to 195 (FSWI…ILLR).

Belongs to the DedA family.

The protein resides in the cell membrane. This is an uncharacterized protein from Mycobacterium tuberculosis (strain CDC 1551 / Oshkosh).